Here is a 90-residue protein sequence, read N- to C-terminus: UPF0297 protein ABC1593 (90 aa).

Belongs to the UPF0297 family.

The polypeptide is UPF0297 protein ABC1593 (Shouchella clausii (strain KSM-K16) (Alkalihalobacillus clausii)).